The following is a 387-amino-acid chain: Phosphoglycerate kinase (387 aa).

Substrate-binding positions include 21-23 (DLN), Arg-36, 59-62 (HLGR), Arg-113, and Arg-146. Residues Lys-197, Glu-314, and 340–343 (GGDT) contribute to the ATP site.

This sequence belongs to the phosphoglycerate kinase family. As to quaternary structure, monomer.

Its subcellular location is the cytoplasm. The catalysed reaction is (2R)-3-phosphoglycerate + ATP = (2R)-3-phospho-glyceroyl phosphate + ADP. It participates in carbohydrate degradation; glycolysis; pyruvate from D-glyceraldehyde 3-phosphate: step 2/5. The protein is Phosphoglycerate kinase of Aeromonas salmonicida (strain A449).